The primary structure comprises 468 residues: MNSVLSNIEKLDTYILRRNEYVAESKDEPNKLNTSRKLEVTTKKNQSNNKKRPPPINKARKSLPSIFRRAEENKDSAQIITPTGSKIIGSPLYKRSKSDSFFDHAFNFDKNLGKGSFGEVVAATCRSTSKKFAIKKIPFSKLSKDQYREAYGHMNIPCHPNIVRFHQAWIDKQILHIQLEMCDKSLAAYCHGIDWLEDKELWNVFLDILQGLGHLHNNFMLHNDIKPDNIFMTKNKVCKLGDFGLISDMRSEPINNSSNKHYQSEGDGKYCSKEAINGTLSIFSDIFSFGISILEVGTNIHLPSYGTGWEPIRKWEIPEEILEPMSDELRELVKQMMDKAPTRRPTCSELMKNHVVKEKLRIRKQEVEHIPSESQFQPISYLTTESPLGSRESSCSSIDFLDHFENAEKKTPFVSKLNFDLEDDEDEYEVFSPPRTPVKKSRYQQTMPEVSPPRKIQKLFQRKNLFDE.

Basic and acidic residues predominate over residues 25–42; the sequence is SKDEPNKLNTSRKLEVTT. The disordered stretch occupies residues 25-63; sequence SKDEPNKLNTSRKLEVTTKKNQSNNKKRPPPINKARKSL. A compositionally biased stretch (basic residues) spans 49-61; it reads NKKRPPPINKARK. In terms of domain architecture, Protein kinase spans 106-357; sequence FNFDKNLGKG…SELMKNHVVK (252 aa). ATP-binding positions include 112 to 120 and K135; that span reads LGKGSFGEV. D224 (proton acceptor) is an active-site residue. Mg(2+) contacts are provided by N229 and D242. Residues 425 to 453 are disordered; the sequence is EDEYEVFSPPRTPVKKSRYQQTMPEVSPP.

This sequence belongs to the protein kinase superfamily. Ser/Thr protein kinase family. WEE1 subfamily. In the 12-13-cell embryo, expressed in the E blastomere. In the 16-cell embryo, expressed in the eight AB cells.

It localises to the nucleus. It catalyses the reaction L-seryl-[protein] + ATP = O-phospho-L-seryl-[protein] + ADP + H(+). It carries out the reaction L-threonyl-[protein] + ATP = O-phospho-L-threonyl-[protein] + ADP + H(+). Acts as a negative regulator of entry into mitosis (G2 to M transition) by phosphorylation of the CDK1 kinase. In Caenorhabditis elegans, this protein is Membrane-associated tyrosine- and threonine-specific cdc2-inhibitory kinase wee-1.1 (wee-1.1).